We begin with the raw amino-acid sequence, 166 residues long: UBA-like domain-containing protein 2-A (166 aa).

The interval 120 to 166 (QQPVWLPPASPTTHLHHHHHHPQPVWPPNSQPTGGPQKAMAAMDGQR) is disordered.

This sequence belongs to the UBALD family.

This is UBA-like domain-containing protein 2-A (ubald2-a) from Xenopus laevis (African clawed frog).